The primary structure comprises 141 residues: Protein X (141 aa).

Residues 22–52 (GPQSSGPPFPRPAAGSAASSASSPSPSDESD) are disordered. Positions 33–48 (PAAGSAASSASSPSPS) are enriched in low complexity. A mitochondrial targeting sequence region spans residues 68 to 113 (PCCLVFTCADLRTMDSTVNFVSWHAKRQLGMPSKDLWTPYIKDQLL).

Belongs to the orthohepadnavirus protein X family. In terms of assembly, may form homodimer. May interact with host CEBPA, CFLAR, CREB1, DDB1, E4F1, HBXIP, HSPD1/HSP60, NFKBIA, POLR2E and SMAD4. Interacts with host SMC5-SMC6 complex and induces its degradation. Interacts with host TRPC4AP; leading to prevent ubiquitination of TRPC4AP. Interacts with host PLSCR1; this interaction promotes ubiquitination and degradation of HBx and impairs HBx-mediated cell proliferation. In terms of processing, a fraction may be phosphorylated in insect cells and HepG2 cells, a human hepatoblastoma cell line. Phosphorylated in vitro by host protein kinase C or mitogen-activated protein kinase. N-acetylated in insect cells.

It is found in the host cytoplasm. The protein localises to the host nucleus. The protein resides in the host mitochondrion. Its function is as follows. Multifunctional protein that plays a role in silencing host antiviral defenses and promoting viral transcription. Does not seem to be essential for HBV infection. May be directly involved in development of cirrhosis and liver cancer (hepatocellular carcinoma). Most of cytosolic activities involve modulation of cytosolic calcium. The effect on apoptosis is controversial depending on the cell types in which the studies have been conducted. May induce apoptosis by localizing in mitochondria and causing loss of mitochondrial membrane potential. May also modulate apoptosis by binding host CFLAR, a key regulator of the death-inducing signaling complex (DISC). Promotes viral transcription by using the host E3 ubiquitin ligase DDB1 to target the SMC5-SMC6 complex to proteasomal degradation. This host complex would otherwise bind to viral episomal DNA, and prevents its transcription. Moderately stimulates transcription of many different viral and cellular transcription elements. Promoters and enhancers stimulated by HBx contain DNA binding sites for NF-kappa-B, AP-1, AP-2, c-EBP, ATF/CREB, or the calcium-activated factor NF-AT. This is Protein X from Woodchuck hepatitis B virus (isolate w64/pWS23) (WHV).